Here is a 1219-residue protein sequence, read N- to C-terminus: NHS-like protein 2 (1219 aa).

10 disordered regions span residues 162-181, 288-321, 336-364, 400-423, 474-591, 669-741, 854-938, 979-1003, 1033-1087, and 1121-1197; these read FRSS…QSAK, FSNF…HSAP, FPSL…SDHP, TPSA…GNSW, GLLA…ELVL, QGSS…SASV, GAEE…STAS, IGLQ…KKPS, LEED…DKTA, and WKET…KTTN. A compositionally biased stretch (polar residues) spans 288–312; the sequence is FSNFSQRDQGHSSSPTGSLARSATS. Residues 352–364 show a composition bias toward basic and acidic residues; the sequence is GDAHQARSASDHP. At Ser499 the chain carries Phosphoserine. Polar residues predominate over residues 526 to 545; that stretch reads ASTSSEGSNSTDNIAALSTE. Positions 549-567 are enriched in basic residues; sequence RHRRQRSKSISLKKAKKKP. Ser575 bears the Phosphoserine mark. Positions 674–687 are enriched in low complexity; the sequence is SLASPSTSRATTPS. Ser690 bears the Phosphoserine mark. 2 stretches are compositionally biased toward polar residues: residues 708-729 and 897-908; these read MSPS…SMSL and TSPTMAMASRSS. A Phosphoserine modification is found at Ser1048. Residues 1076-1087 show a composition bias toward basic and acidic residues; the sequence is AEEKSLISDKTA. Over residues 1131–1144 the composition is skewed to polar residues; the sequence is SKPSSHSPVKNTAD. Residues 1145–1160 are compositionally biased toward low complexity; it reads SPTGEAAAAPGPSSSA. A Phosphoserine modification is found at Ser1208.

It belongs to the NHS family.

This Mus musculus (Mouse) protein is NHS-like protein 2.